A 415-amino-acid polypeptide reads, in one-letter code: Serine--tRNA ligase (415 aa).

231-233 (TAE) lines the L-serine pocket. Position 262–264 (262–264 (RSE)) interacts with ATP. Residue Glu-285 participates in L-serine binding. 349 to 352 (EISS) is an ATP binding site. Ser-383 is an L-serine binding site.

This sequence belongs to the class-II aminoacyl-tRNA synthetase family. Type-1 seryl-tRNA synthetase subfamily. In terms of assembly, homodimer. The tRNA molecule binds across the dimer.

It localises to the cytoplasm. It catalyses the reaction tRNA(Ser) + L-serine + ATP = L-seryl-tRNA(Ser) + AMP + diphosphate + H(+). The enzyme catalyses tRNA(Sec) + L-serine + ATP = L-seryl-tRNA(Sec) + AMP + diphosphate + H(+). It participates in aminoacyl-tRNA biosynthesis; selenocysteinyl-tRNA(Sec) biosynthesis; L-seryl-tRNA(Sec) from L-serine and tRNA(Sec): step 1/1. Its function is as follows. Catalyzes the attachment of serine to tRNA(Ser). Is also able to aminoacylate tRNA(Sec) with serine, to form the misacylated tRNA L-seryl-tRNA(Sec), which will be further converted into selenocysteinyl-tRNA(Sec). The sequence is that of Serine--tRNA ligase from Helicobacter pylori (strain HPAG1).